The following is a 468-amino-acid chain: UDP-N-acetylmuramoyl-L-alanine--L-glutamate ligase (468 aa).

Gly-122–Thr-128 serves as a coordination point for ATP.

It belongs to the MurCDEF family. MurD2 subfamily.

The protein localises to the cytoplasm. The enzyme catalyses UDP-N-acetyl-alpha-D-muramoyl-L-alanine + L-glutamate + ATP = UDP-N-acetyl-alpha-D-muramoyl-L-alanyl-L-glutamate + ADP + phosphate + H(+). The protein operates within cell wall biogenesis; peptidoglycan biosynthesis. In terms of biological role, cell wall formation. Catalyzes the addition of L-glutamate to the nucleotide precursor UDP-N-acetylmuramoyl-L-alanine. The sequence is that of UDP-N-acetylmuramoyl-L-alanine--L-glutamate ligase from Xylella fastidiosa (strain 9a5c).